The following is a 326-amino-acid chain: Iron-sulfur cluster assembly SufBD family protein PH0883 (326 aa).

Belongs to the iron-sulfur cluster assembly SufBD family.

The chain is Iron-sulfur cluster assembly SufBD family protein PH0883 from Pyrococcus horikoshii (strain ATCC 700860 / DSM 12428 / JCM 9974 / NBRC 100139 / OT-3).